We begin with the raw amino-acid sequence, 90 residues long: Probable Fe(2+)-trafficking protein (90 aa).

Belongs to the Fe(2+)-trafficking protein family.

Could be a mediator in iron transactions between iron acquisition and iron-requiring processes, such as synthesis and/or repair of Fe-S clusters in biosynthetic enzymes. This is Probable Fe(2+)-trafficking protein from Pseudomonas aeruginosa (strain UCBPP-PA14).